The following is a 101-amino-acid chain: NAD(P)H-quinone oxidoreductase subunit 4L, chloroplastic (101 aa).

The next 3 helical transmembrane spans lie at 2 to 22, 32 to 52, and 61 to 81; these read MLEHVLVLSAYLLSIGIYGLI, MCLELILNAVNMNFVTFSDLF, and IFSIFVIAIAAAEAAIGLAIV.

It belongs to the complex I subunit 4L family. As to quaternary structure, NDH is composed of at least 16 different subunits, 5 of which are encoded in the nucleus.

The protein localises to the plastid. Its subcellular location is the chloroplast thylakoid membrane. It catalyses the reaction a plastoquinone + NADH + (n+1) H(+)(in) = a plastoquinol + NAD(+) + n H(+)(out). It carries out the reaction a plastoquinone + NADPH + (n+1) H(+)(in) = a plastoquinol + NADP(+) + n H(+)(out). Its function is as follows. NDH shuttles electrons from NAD(P)H:plastoquinone, via FMN and iron-sulfur (Fe-S) centers, to quinones in the photosynthetic chain and possibly in a chloroplast respiratory chain. The immediate electron acceptor for the enzyme in this species is believed to be plastoquinone. Couples the redox reaction to proton translocation, and thus conserves the redox energy in a proton gradient. The chain is NAD(P)H-quinone oxidoreductase subunit 4L, chloroplastic from Nandina domestica (Heavenly bamboo).